Consider the following 506-residue polypeptide: uncharacterized protein (506 aa).

Belongs to the Mg-chelatase subunits D/I family. ComM subfamily.

This is an uncharacterized protein from Escherichia coli (strain K12).